Reading from the N-terminus, the 258-residue chain is Indole-3-glycerol phosphate synthase (258 aa).

The protein belongs to the TrpC family.

The catalysed reaction is 1-(2-carboxyphenylamino)-1-deoxy-D-ribulose 5-phosphate + H(+) = (1S,2R)-1-C-(indol-3-yl)glycerol 3-phosphate + CO2 + H2O. It functions in the pathway amino-acid biosynthesis; L-tryptophan biosynthesis; L-tryptophan from chorismate: step 4/5. This is Indole-3-glycerol phosphate synthase from Chlorobium phaeovibrioides (strain DSM 265 / 1930) (Prosthecochloris vibrioformis (strain DSM 265)).